Reading from the N-terminus, the 203-residue chain is Thymidylate kinase (203 aa).

Residue 10–17 (GTEGSGKS) participates in ATP binding.

Belongs to the thymidylate kinase family.

It carries out the reaction dTMP + ATP = dTDP + ADP. Its function is as follows. Phosphorylation of dTMP to form dTDP in both de novo and salvage pathways of dTTP synthesis. This chain is Thymidylate kinase, found in Dichelobacter nodosus (strain VCS1703A).